Here is a 449-residue protein sequence, read N- to C-terminus: Glucose-6-phosphate isomerase (449 aa).

Catalysis depends on Glu-291, which acts as the Proton donor. Residues His-312 and Lys-426 contribute to the active site.

It belongs to the GPI family.

It is found in the cytoplasm. The catalysed reaction is alpha-D-glucose 6-phosphate = beta-D-fructose 6-phosphate. It participates in carbohydrate biosynthesis; gluconeogenesis. The protein operates within carbohydrate degradation; glycolysis; D-glyceraldehyde 3-phosphate and glycerone phosphate from D-glucose: step 2/4. Functionally, catalyzes the reversible isomerization of glucose-6-phosphate to fructose-6-phosphate. The chain is Glucose-6-phosphate isomerase from Streptococcus pyogenes serotype M2 (strain MGAS10270).